The primary structure comprises 342 residues: Glycerol-3-phosphate dehydrogenase [NAD(P)+] (342 aa).

Residues tryptophan 11, arginine 33, and lysine 112 each contribute to the NADPH site. Sn-glycerol 3-phosphate contacts are provided by lysine 112, glycine 147, and serine 149. Position 151 (alanine 151) interacts with NADPH. Positions 202, 255, 265, 266, and 267 each coordinate sn-glycerol 3-phosphate. The active-site Proton acceptor is lysine 202. Arginine 266 is a binding site for NADPH. NADPH is bound by residues valine 290 and glutamate 292.

Belongs to the NAD-dependent glycerol-3-phosphate dehydrogenase family.

Its subcellular location is the cytoplasm. The catalysed reaction is sn-glycerol 3-phosphate + NAD(+) = dihydroxyacetone phosphate + NADH + H(+). The enzyme catalyses sn-glycerol 3-phosphate + NADP(+) = dihydroxyacetone phosphate + NADPH + H(+). It functions in the pathway membrane lipid metabolism; glycerophospholipid metabolism. In terms of biological role, catalyzes the reduction of the glycolytic intermediate dihydroxyacetone phosphate (DHAP) to sn-glycerol 3-phosphate (G3P), the key precursor for phospholipid synthesis. This is Glycerol-3-phosphate dehydrogenase [NAD(P)+] from Cupriavidus metallidurans (strain ATCC 43123 / DSM 2839 / NBRC 102507 / CH34) (Ralstonia metallidurans).